The sequence spans 205 residues: Protein-L-isoaspartate O-methyltransferase (205 aa).

The active site involves Ser-56.

The protein belongs to the methyltransferase superfamily. L-isoaspartyl/D-aspartyl protein methyltransferase family.

Its subcellular location is the cytoplasm. It carries out the reaction [protein]-L-isoaspartate + S-adenosyl-L-methionine = [protein]-L-isoaspartate alpha-methyl ester + S-adenosyl-L-homocysteine. Catalyzes the methyl esterification of L-isoaspartyl residues in peptides and proteins that result from spontaneous decomposition of normal L-aspartyl and L-asparaginyl residues. It plays a role in the repair and/or degradation of damaged proteins. In Pyrobaculum arsenaticum (strain DSM 13514 / JCM 11321 / PZ6), this protein is Protein-L-isoaspartate O-methyltransferase.